A 741-amino-acid polypeptide reads, in one-letter code: Exostosin-1b (741 aa).

The Cytoplasmic portion of the chain corresponds to 1-7 (MQAKKRY). Residues 8-28 (LISLLTGAFLVLLIYLGGGGV) traverse the membrane as a helical; Signal-anchor for type II membrane protein segment. Topologically, residues 29–741 (PGPAAPGSRS…RKKYREIERL (713 aa)) are lumenal. 2 N-linked (GlcNAc...) asparagine glycosylation sites follow: asparagine 84 and asparagine 325. UDP-N-acetyl-alpha-D-glucosamine-binding residues include arginine 435, arginine 544, aspartate 560, glutamate 561, aspartate 562, glutamate 648, aspartate 649, and arginine 696. Aspartate 562 contributes to the Mn(2+) binding site. Cysteine 647 and cysteine 699 are joined by a disulfide. Residue aspartate 649 is part of the active site.

It belongs to the glycosyltransferase 47 family. Requires Mn(2+) as cofactor.

Its subcellular location is the endoplasmic reticulum membrane. The enzyme catalyses 3-O-{[(1-&gt;4)-beta-D-GlcA-(1-&gt;4)-alpha-D-GlcNAc](n)-(1-&gt;4)-beta-D-GlcA-(1-&gt;3)-beta-D-Gal-(1-&gt;3)-beta-D-Gal-(1-&gt;4)-beta-D-Xyl}-L-seryl-[protein] + UDP-N-acetyl-alpha-D-glucosamine = 3-O-{alpha-D-GlcNAc-[(1-&gt;4)-beta-D-GlcA-(1-&gt;4)-alpha-D-GlcNAc](n)-(1-&gt;4)-beta-D-GlcA-(1-&gt;3)-beta-D-Gal-(1-&gt;3)-beta-D-Gal-(1-&gt;4)-beta-D-Xyl}-L-seryl-[protein] + UDP + H(+). It carries out the reaction 3-O-{alpha-D-GlcNAc-[(1-&gt;4)-beta-D-GlcA-(1-&gt;4)-alpha-D-GlcNAc](n)-(1-&gt;4)-beta-D-GlcA-(1-&gt;3)-beta-D-Gal-(1-&gt;3)-beta-D-Gal-(1-&gt;4)-beta-D-Xyl}-L-seryl-[protein] + UDP-alpha-D-glucuronate = 3-O-{[(1-&gt;4)-beta-D-GlcA-(1-&gt;4)-alpha-D-GlcNAc](n+1)-(1-&gt;4)-beta-D-GlcA-(1-&gt;3)-beta-D-Gal-(1-&gt;3)-beta-D-Gal-(1-&gt;4)-beta-D-Xyl}-L-seryl-[protein] + UDP + H(+). The protein operates within protein modification; protein glycosylation. In terms of biological role, glycosyltransferase required for the biosynthesis of heparan-sulfate. The polypeptide is Exostosin-1b (ext1b) (Danio rerio (Zebrafish)).